We begin with the raw amino-acid sequence, 321 residues long: Ribosomal RNA small subunit methyltransferase H (321 aa).

Residues 29 to 31, D48, Y76, D97, and Q104 each bind S-adenosyl-L-methionine; that span reads GGH. The tract at residues 277-321 is disordered; the sequence is LTRGAEPASETEKAENPRAASVRLRAVERTAPNPDHTRKPTGGAS.

This sequence belongs to the methyltransferase superfamily. RsmH family.

The protein localises to the cytoplasm. The enzyme catalyses cytidine(1402) in 16S rRNA + S-adenosyl-L-methionine = N(4)-methylcytidine(1402) in 16S rRNA + S-adenosyl-L-homocysteine + H(+). Functionally, specifically methylates the N4 position of cytidine in position 1402 (C1402) of 16S rRNA. In Frankia casuarinae (strain DSM 45818 / CECT 9043 / HFP020203 / CcI3), this protein is Ribosomal RNA small subunit methyltransferase H.